Consider the following 456-residue polypeptide: MRSSWIKPRLGKDNVTQMNFARNGYITEEMDFVAKKENLPPSLIMEEVARGRLIIPANINHLNLEPMSIGVASRCKVNANIGASPNASDINEEVEKLKLAVKYGADTVMDLSTGGVNLDEVRQAIIQESPVPIGTVPVYQALESVHGSIDRLTEDDFLHIIEKHCQQGVDYQTIHAGLLIEHLPKVKGRITGIVSRGGGILAQWMLHHFKQNPLYTRFDDICEIFKKYDCTFSLGDSLRPGCLHDASDDAQLAELKTLGELTRRAWEHNVQVMVEGPGHVPMDQIEFNVRKQMEECSEAPFYVLGPLVTDISPGYDHISSAIGAAMAGWYGTSMLCYVTPKEHLGLPNAEDVREGLIAYKIAAHAADIARHRAGARDRDDELSHARYNFDWNKQFELSLDPERAKQYHDETLPEEIFKKAEFCSMCGPKHCPMNSKISDESLDQLKDKLEECSTSA.

Substrate contacts are provided by residues asparagine 80, methionine 109, tyrosine 139, histidine 175, 195 to 197 (SRG), 236 to 239 (DSLR), and glutamate 275. Histidine 279 serves as a coordination point for Zn(2+). Residue tyrosine 302 participates in substrate binding. Histidine 343 contributes to the Zn(2+) binding site. [4Fe-4S] cluster-binding residues include cysteine 423, cysteine 426, and cysteine 431.

The protein belongs to the ThiC family. [4Fe-4S] cluster serves as cofactor.

It carries out the reaction 5-amino-1-(5-phospho-beta-D-ribosyl)imidazole + S-adenosyl-L-methionine = 4-amino-2-methyl-5-(phosphooxymethyl)pyrimidine + CO + 5'-deoxyadenosine + formate + L-methionine + 3 H(+). Its pathway is cofactor biosynthesis; thiamine diphosphate biosynthesis. In terms of biological role, catalyzes the synthesis of the hydroxymethylpyrimidine phosphate (HMP-P) moiety of thiamine from aminoimidazole ribotide (AIR) in a radical S-adenosyl-L-methionine (SAM)-dependent reaction. This chain is Phosphomethylpyrimidine synthase, found in Prochlorococcus marinus (strain MIT 9301).